Here is a 251-residue protein sequence, read N- to C-terminus: Probable transcriptional regulatory protein Arth_2304 (251 aa).

This sequence belongs to the TACO1 family.

The protein localises to the cytoplasm. In Arthrobacter sp. (strain FB24), this protein is Probable transcriptional regulatory protein Arth_2304.